The chain runs to 188 residues: Adenine phosphoribosyltransferase (188 aa).

It belongs to the purine/pyrimidine phosphoribosyltransferase family. Homodimer.

Its subcellular location is the cytoplasm. The enzyme catalyses AMP + diphosphate = 5-phospho-alpha-D-ribose 1-diphosphate + adenine. Its pathway is purine metabolism; AMP biosynthesis via salvage pathway; AMP from adenine: step 1/1. Catalyzes a salvage reaction resulting in the formation of AMP, that is energically less costly than de novo synthesis. In Salinispora arenicola (strain CNS-205), this protein is Adenine phosphoribosyltransferase.